Consider the following 2792-residue polypeptide: E3 ubiquitin-protein ligase UBR5 (2792 aa).

Threonine 2 is subject to N-acetylthreonine. Residues 77 to 88 (DRLELGKPDNND) are compositionally biased toward basic and acidic residues. Residues 77–175 (DRLELGKPDN…DRGSGLLGSQ (99 aa)) form a disordered region. The segment covering 94-111 (SSSGTGRTSRPGRTSDSP) has biased composition (low complexity). A Phosphoserine modification is found at serine 110. Residues 135-144 (GVGGSGGGSS) show a composition bias toward gly residues. The 43-residue stretch at 184–226 (VIPEELISQAQVVLQGKSRSVIIRELQRTNLDVNLAVNNLLSR) folds into the UBA domain. Residue serine 321 is modified to Phosphoserine. Over residues 322–341 (FDNERGSTSKEGESNPDKKN) the composition is skewed to basic and acidic residues. A disordered region spans residues 322–347 (FDNERGSTSKEGESNPDKKNTPVQSP). Phosphoserine occurs at positions 346 and 572. The segment covering 577–598 (KSMEKASKTLETKPESKQEPVK) has biased composition (basic and acidic residues). The disordered stretch occupies residues 577–642 (KSMEKASKTL…APREEEKVNE (66 aa)). Serine 606 is subject to Phosphoserine. Residues 608-622 (ASTCSDASSIASSAS) show a composition bias toward low complexity. At threonine 631 the chain carries Phosphothreonine. A phosphoserine mark is found at serine 802, serine 922, and serine 1012. Disordered regions lie at residues 993–1029 (AGLGRHEAGASSSDHQDPVSPPIAPPSWVPDPPSMDP) and 1046–1069 (TAATGSGQGPSTSTIPGPSTEPSV). The span at 1011 to 1027 (VSPPIAPPSWVPDPPSM) shows a compositional bias: pro residues. Residues 1046–1067 (TAATGSGQGPSTSTIPGPSTEP) show a composition bias toward polar residues. Phosphothreonine is present on residues threonine 1109 and threonine 1129. The UBR-type zinc finger occupies 1171-1239 (DTCSFTWTGA…EKCKCKTLIA (69 aa)). 5 positions are modified to phosphoserine: serine 1221, serine 1302, serine 1349, serine 1369, and serine 1475. Positions 1293-1312 (REDRNRKTASPEDSDMPDHD) are disordered. The interval 1509–1734 (SVEPLPPRPS…PSSTSTPAAS (226 aa)) is disordered. Residues 1518 to 1531 (SSDQASSSSQSQSS) show a composition bias toward low complexity. The span at 1532 to 1547 (YIIRNPQQRRISQSQP) shows a compositional bias: polar residues. Serine 1543 carries the post-translational modification Phosphoserine. 2 stretches are compositionally biased toward acidic residues: residues 1553–1568 (EEQDDIVSADVEEVEV) and 1599–1608 (HDEDGSDMEL). The span at 1623–1632 (NHSNQDNASG) shows a compositional bias: polar residues. 3 stretches are compositionally biased toward low complexity: residues 1635–1651 (SVVTAATAGSEAGASSV), 1662–1675 (SNDSSDSDSSSSQS), and 1720–1734 (AASTAPSSTSTPAAS). Threonine 1730 bears the Phosphothreonine mark. Serine 1735 carries the post-translational modification Phosphoserine. At tyrosine 1740 the chain carries Phosphotyrosine. Serine 1774 is modified (phosphoserine). Residues 1853-1884 (LASAGDPGHPNHPLHASQNSARRERMTAREEA) form a disordered region. Residues 1873–1884 (ARRERMTAREEA) are compositionally biased toward basic and acidic residues. Threonine 1963 carries the phosphothreonine modification. The segment at 1978–2015 (GIDNEDSEHENDDDTSQSATLNDKDDDSLPAETGQNHP) is disordered. The segment covering 1979-1992 (IDNEDSEHENDDDT) has biased composition (acidic residues). Phosphoserine is present on residues serine 1984, serine 2020, and serine 2022. Residue threonine 2024 is modified to Phosphothreonine. Residue serine 2070 is modified to Phosphoserine. Residues 2111–2137 (RQKKEGEEQSLLAEEADSSKPGPSAPD) form a disordered region. A Phosphothreonine modification is found at threonine 2207. A phosphoserine mark is found at serine 2235 and serine 2283. The segment at 2317 to 2387 (HTSLMQRLRN…SDDPDPLPAH (71 aa)) is disordered. Basic and acidic residues-rich tracts occupy residues 2326 to 2342 (NRGERDREREREREMRR) and 2350 to 2362 (SRRDRDRDFRRQL). One can recognise a PABC domain in the interval 2371 to 2448 (PASEGNPSDD…AMELIIAHGR (78 aa)). The HECT domain occupies 2455-2792 (ILDLGLLDSS…AIKTKNFGFV (338 aa)). Phosphoserine is present on residues serine 2463, serine 2477, and serine 2479. The tract at residues 2467–2494 (VQENRKRHGSSRSVVDMDLEDTDDGDDN) is disordered. Acidic residues predominate over residues 2483–2493 (MDLEDTDDGDD). Residue cysteine 2761 is the Glycyl thioester intermediate of the active site.

This sequence belongs to the UBR5 family. Homotetramer; composed of a dimer of dimers. Associates with CDK9 and TFIIS/TCEA1 and forms a transcription regulatory complex made of CDK9, RNAP II, UBR5 and TFIIS/TCEA1 that can stimulate target gene transcription (e.g. gamma fibrinogen/FGG) by recruiting their promoters. Associates with the E3 ligase complex containing DYRK2, EDD/UBR5, DDB1 and DCAF1 proteins (EDVP complex). Binds TOPBP1. Interacts with PIH1D1. Interacts with CIB1.

It localises to the nucleus. It is found in the cytoplasm. The catalysed reaction is S-ubiquitinyl-[E2 ubiquitin-conjugating enzyme]-L-cysteine + [acceptor protein]-L-lysine = [E2 ubiquitin-conjugating enzyme]-L-cysteine + N(6)-ubiquitinyl-[acceptor protein]-L-lysine.. It functions in the pathway protein modification; protein ubiquitination. E3 ubiquitin-protein ligase involved in different protein quality control pathways in the cytoplasm and nucleus. Mainly acts as a ubiquitin chain elongator that extends pre-ubiquitinated substrates. Component of the N-end rule pathway: ubiquitinates proteins bearing specific N-terminal residues that are destabilizing according to the N-end rule, leading to their degradation. Recognizes type-1 N-degrons, containing positively charged amino acids (Arg, Lys and His). Together with UBR4, part of a cytoplasm protein quality control pathway that prevents protein aggregation by catalyzing assembly of heterotypic 'Lys-11'-/'Lys-48'-linked branched ubiquitin chains on aggregated proteins, leading to substrate recognition by the segregase p97/VCP and degradation by the proteasome: UBR5 is probably branching multiple 'Lys-48'-linked chains of substrates initially modified with mixed conjugates by UBR4. Together with ITCH, catalyzes 'Lys-48'-/'Lys-63'-branched ubiquitination of TXNIP, leading to its degradation: UBR5 mediates branching of 'Lys-48'-linked chains of substrates initially modified with 'Lys-63'-linked conjugates by ITCH. Catalytic component of a nuclear protein quality control pathway that mediates ubiquitination and degradation of unpaired transcription factors (i.e. transcription factors that are not assembled into functional multiprotein complexes): specifically recognizes and binds degrons that are not accessible when transcription regulators are associated with their coactivators. Ubiquitinates various unpaired transcription regulator (MYC, SUPT4H1, SUPT5H, CDC20 and MCRS1), as well as ligand-bound nuclear receptors (ESR1, NR1H3, NR3C1, PGR, RARA, RXRA AND VDR) that are not associated with their nuclear receptor coactivators (NCOAs). Involved in maturation and/or transcriptional regulation of mRNA by mediating polyubiquitination and activation of CDK9. Also acts as a regulator of DNA damage response by acting as a suppressor of RNF168, an E3 ubiquitin-protein ligase that promotes accumulation of 'Lys-63'-linked histone H2A and H2AX at DNA damage sites, thereby acting as a guard against excessive spreading of ubiquitinated chromatin at damaged chromosomes. Regulates DNA topoisomerase II binding protein (TopBP1) in the DNA damage response. Ubiquitinates acetylated PCK1. Acts as a positive regulator of the canonical Wnt signaling pathway by mediating (1) ubiquitination and stabilization of CTNNB1, and (2) 'Lys-48'-linked ubiquitination and degradation of TLE3. Promotes disassembly of the mitotic checkpoint complex (MCC) from the APC/C complex by catalyzing ubiquitination of BUB1B, BUB3 and CDC20. Plays an essential role in extraembryonic development. Required for the maintenance of skeletal tissue homeostasis by acting as an inhibitor of hedgehog (HH) signaling. The protein is E3 ubiquitin-protein ligase UBR5 of Mus musculus (Mouse).